A 322-amino-acid chain; its full sequence is Acetyl-coenzyme A carboxylase carboxyl transferase subunit alpha (322 aa).

The CoA carboxyltransferase C-terminal domain occupies 39–293 (RLASKSQQLT…KRALAESLRQ (255 aa)).

It belongs to the AccA family. As to quaternary structure, acetyl-CoA carboxylase is a heterohexamer composed of biotin carboxyl carrier protein (AccB), biotin carboxylase (AccC) and two subunits each of ACCase subunit alpha (AccA) and ACCase subunit beta (AccD).

It is found in the cytoplasm. It carries out the reaction N(6)-carboxybiotinyl-L-lysyl-[protein] + acetyl-CoA = N(6)-biotinyl-L-lysyl-[protein] + malonyl-CoA. Its pathway is lipid metabolism; malonyl-CoA biosynthesis; malonyl-CoA from acetyl-CoA: step 1/1. Functionally, component of the acetyl coenzyme A carboxylase (ACC) complex. First, biotin carboxylase catalyzes the carboxylation of biotin on its carrier protein (BCCP) and then the CO(2) group is transferred by the carboxyltransferase to acetyl-CoA to form malonyl-CoA. The chain is Acetyl-coenzyme A carboxylase carboxyl transferase subunit alpha from Ralstonia pickettii (strain 12J).